We begin with the raw amino-acid sequence, 690 residues long: Proprotein convertase subtilisin/kexin type 9 (690 aa).

A signal peptide spans 1–28 (MGTVSSRRSWWPLPLLLLLLLGPAGARA). Residues 29 to 150 (QEDEDGDYEE…IEEDSSVFAQ (122 aa)) constitute a propeptide that is removed on maturation. Tyr36 carries the post-translational modification Sulfotyrosine. Ser45 carries the post-translational modification Phosphoserine. The 73-residue stretch at 75–147 (TYVVVLKEET…VDYIEEDSSV (73 aa)) folds into the Inhibitor I9 domain. A Peptidase S8 domain is found at 153–459 (PWNLERITPP…GWQLFCRTVW (307 aa)). Catalysis depends on charge relay system residues Asp184 and His224. Cystine bridges form between Cys221-Cys253 and Cys321-Cys356. Catalysis depends on Ser384, which acts as the Charge relay system. Positions 448–690 (GAGWQLFCRT…HLVQASQELQ (243 aa)) are C-terminal domain. Intrachain disulfides connect Cys455–Cys525, Cys475–Cys524, and Cys484–Cys507. A glycan (N-linked (GlcNAc...) asparagine) is linked at Asn531. Intrachain disulfides connect Cys532–Cys599, Cys550–Cys598, Cys560–Cys586, Cys606–Cys677, Cys624–Cys676, and Cys633–Cys652. Ser686 is subject to Phosphoserine.

Belongs to the peptidase S8 family. Monomer. Can self-associate to form dimers and higher multimers which may have increased LDLR degrading activity. The precursor protein but not the mature protein may form multimers. Interacts with APOB, VLDLR, LRP8/APOER2 and BACE1. The full-length immature form (pro-PCSK9) interacts with SCNN1A, SCNN1B and SCNN1G. The pro-PCSK9 form (via C-terminal domain) interacts with LDLR. Interacts (via the C-terminal domain) with ANXA2 (via repeat Annexin 1); the interaction inhibits the degradation of LDLR. Ca(2+) is required as a cofactor. Cleavage by furin and PCSK5 generates a truncated inactive protein that is unable to induce LDLR degradation. Post-translationally, undergoes autocatalytic cleavage in the endoplasmic reticulum to release the propeptide from the N-terminus and the cleavage of the propeptide is strictly required for its maturation and activation. The cleaved propeptide however remains associated with the catalytic domain through non-covalent interactions, preventing potential substrates from accessing its active site. As a result, it is secreted from cells as a propeptide-containing, enzymatically inactive protein. In terms of processing, phosphorylation protects the propeptide against proteolysis.

The protein localises to the cytoplasm. The protein resides in the secreted. It localises to the endosome. Its subcellular location is the lysosome. It is found in the cell surface. The protein localises to the endoplasmic reticulum. The protein resides in the golgi apparatus. Its proteolytic activity is autoinhibited by the non-covalent binding of the propeptide to the catalytic domain. Inhibited by EGTA. Functionally, crucial player in the regulation of plasma cholesterol homeostasis. Binds to low-density lipid receptor family members: low density lipoprotein receptor (LDLR), very low density lipoprotein receptor (VLDLR), apolipoprotein E receptor (LRP1/APOER) and apolipoprotein receptor 2 (LRP8/APOER2), and promotes their degradation in intracellular acidic compartments. Acts via a non-proteolytic mechanism to enhance the degradation of the hepatic LDLR through a clathrin LDLRAP1/ARH-mediated pathway. May prevent the recycling of LDLR from endosomes to the cell surface or direct it to lysosomes for degradation. Can induce ubiquitination of LDLR leading to its subsequent degradation. Inhibits intracellular degradation of APOB via the autophagosome/lysosome pathway in a LDLR-independent manner. Involved in the disposal of non-acetylated intermediates of BACE1 in the early secretory pathway. Inhibits epithelial Na(+) channel (ENaC)-mediated Na(+) absorption by reducing ENaC surface expression primarily by increasing its proteasomal degradation. Regulates neuronal apoptosis via modulation of LRP8/APOER2 levels and related anti-apoptotic signaling pathways. The sequence is that of Proprotein convertase subtilisin/kexin type 9 (PCSK9) from Gorilla gorilla gorilla (Western lowland gorilla).